Reading from the N-terminus, the 824-residue chain is Spindle-defective protein 2 (824 aa).

2 stretches are compositionally biased toward acidic residues: residues 16 to 27 (EIEDSPIDDNDN) and 35 to 44 (GDVELEEEEV). Positions 16 to 98 (EIEDSPIDDN…SRPASVMSDK (83 aa)) are disordered. Residues 59-70 (TNMTNPKVNDLT) are compositionally biased toward polar residues. The segment covering 81-98 (SAASSRSASRPASVMSDK) has biased composition (low complexity). A coiled-coil region spans residues 111 to 131 (ENAIEEYTNQVFADENKADLL). The tract at residues 189 to 252 (RAKPGANDNE…GQYQGPNFDL (64 aa)) is disordered. Residues 207–225 (NVPTTSDKSAFITSPMNST) show a composition bias toward polar residues. Residues 304 to 324 (NNKNQDLFAALEEARKRRAAQ) are a coiled coil. Disordered regions lie at residues 342-372 (KPTS…LTTS) and 433-455 (NNGN…VRTM). A compositionally biased stretch (low complexity) spans 349–366 (SGNVVSSTSNDNTTAASS).

In terms of assembly, interacts with sas-7 (via C-terminus); may be recruited to centrioles by sas-7.

The protein localises to the cytoplasm. The protein resides in the cytoskeleton. It localises to the microtubule organizing center. Its subcellular location is the centrosome. It is found in the centriole. Functionally, required both for centrosome duplication and maturation. Required for pericentriolar material (PCM) recruitment. In Caenorhabditis elegans, this protein is Spindle-defective protein 2.